The chain runs to 434 residues: UPF0597 protein CLD_2616 (434 aa).

Belongs to the UPF0597 family.

In Clostridium botulinum (strain Okra / Type B1), this protein is UPF0597 protein CLD_2616.